A 108-amino-acid chain; its full sequence is UPF0145 protein Patl_2194 (108 aa).

The protein belongs to the UPF0145 family.

The sequence is that of UPF0145 protein Patl_2194 from Pseudoalteromonas atlantica (strain T6c / ATCC BAA-1087).